Consider the following 1041-residue polypeptide: Isoleucine--tRNA ligase (1041 aa).

The short motif at proline 53 to histidine 63 is the 'HIGH' region element. The 'KMSKS' region motif lies at lysine 619 to serine 623. Lysine 622 is an ATP binding site.

It belongs to the class-I aminoacyl-tRNA synthetase family. IleS type 2 subfamily. In terms of assembly, monomer. The cofactor is Zn(2+).

Its subcellular location is the cytoplasm. The enzyme catalyses tRNA(Ile) + L-isoleucine + ATP = L-isoleucyl-tRNA(Ile) + AMP + diphosphate. In terms of biological role, catalyzes the attachment of isoleucine to tRNA(Ile). As IleRS can inadvertently accommodate and process structurally similar amino acids such as valine, to avoid such errors it has two additional distinct tRNA(Ile)-dependent editing activities. One activity is designated as 'pretransfer' editing and involves the hydrolysis of activated Val-AMP. The other activity is designated 'posttransfer' editing and involves deacylation of mischarged Val-tRNA(Ile). The protein is Isoleucine--tRNA ligase (ileS) of Mycobacterium tuberculosis (strain CDC 1551 / Oshkosh).